Here is a 208-residue protein sequence, read N- to C-terminus: FMN-dependent NADH:quinone oxidoreductase 1 (208 aa).

Belongs to the azoreductase type 1 family. As to quaternary structure, homodimer. The cofactor is FMN.

The catalysed reaction is 2 a quinone + NADH + H(+) = 2 a 1,4-benzosemiquinone + NAD(+). It carries out the reaction N,N-dimethyl-1,4-phenylenediamine + anthranilate + 2 NAD(+) = 2-(4-dimethylaminophenyl)diazenylbenzoate + 2 NADH + 2 H(+). Functionally, quinone reductase that provides resistance to thiol-specific stress caused by electrophilic quinones. Also exhibits azoreductase activity. Catalyzes the reductive cleavage of the azo bond in aromatic azo compounds to the corresponding amines. This chain is FMN-dependent NADH:quinone oxidoreductase 1, found in Bacillus cereus (strain ATCC 14579 / DSM 31 / CCUG 7414 / JCM 2152 / NBRC 15305 / NCIMB 9373 / NCTC 2599 / NRRL B-3711).